We begin with the raw amino-acid sequence, 285 residues long: 4-diphosphocytidyl-2-C-methyl-D-erythritol kinase (285 aa).

Lys-12 is an active-site residue. Residue 95–105 (PVGAGLAGGST) coordinates ATP. Asp-137 is a catalytic residue.

It belongs to the GHMP kinase family. IspE subfamily.

It catalyses the reaction 4-CDP-2-C-methyl-D-erythritol + ATP = 4-CDP-2-C-methyl-D-erythritol 2-phosphate + ADP + H(+). It participates in isoprenoid biosynthesis; isopentenyl diphosphate biosynthesis via DXP pathway; isopentenyl diphosphate from 1-deoxy-D-xylulose 5-phosphate: step 3/6. In terms of biological role, catalyzes the phosphorylation of the position 2 hydroxy group of 4-diphosphocytidyl-2C-methyl-D-erythritol. This is 4-diphosphocytidyl-2-C-methyl-D-erythritol kinase from Syntrophomonas wolfei subsp. wolfei (strain DSM 2245B / Goettingen).